Here is a 444-residue protein sequence, read N- to C-terminus: Transposase for insertion sequence element IS1557 (444 aa).

A disordered region spans residues 273–292 (PKWGRGRPGKNAAPRPGRER).

This sequence belongs to the transposase 12 family.

This chain is Transposase for insertion sequence element IS1557, found in Mycobacterium tuberculosis (strain CDC 1551 / Oshkosh).